The following is a 295-amino-acid chain: MFKSGFITVIGRPNVGKSTLLNNIMKEKLSIVSHKPQTTRNNIQTILTQEDCQIVFVDTPGMHKPKHKLGEYMVKVAEEALKGVDIVLFMTTPEGQLGRGDVYILEQLKRIKQPVFLIVNKIDENDQGKVAETLKNYHDAYPFFKEIIPISASKDKNVDTLLELMKKYLPEGPKYYPEDMITDQQERFIVAEIIREKALRLLSEEVPHGIAVEMMTMKKNEKGNYEINATMLCERDSHKGIIIGKNGSMLKKISQYARQDIEKFLQSKVSLKVWVKVKKEWRDDNRILKELGYRQ.

The Era-type G domain occupies 3-171 (KSGFITVIGR…LELMKKYLPE (169 aa)). A G1 region spans residues 11–18 (GRPNVGKS). Position 11–18 (11–18 (GRPNVGKS)) interacts with GTP. The interval 37 to 41 (QTTRN) is G2. The G3 stretch occupies residues 58–61 (DTPG). Residues 58–62 (DTPGM) and 120–123 (NKID) each bind GTP. Residues 120-123 (NKID) are G4. Residues 150-152 (ISA) are G5. One can recognise a KH type-2 domain in the interval 202-279 (LSEEVPHGIA…SLKVWVKVKK (78 aa)).

Belongs to the TRAFAC class TrmE-Era-EngA-EngB-Septin-like GTPase superfamily. Era GTPase family. As to quaternary structure, monomer.

Its subcellular location is the cytoplasm. The protein resides in the cell membrane. Its function is as follows. An essential GTPase that binds both GDP and GTP, with rapid nucleotide exchange. Plays a role in 16S rRNA processing and 30S ribosomal subunit biogenesis and possibly also in cell cycle regulation and energy metabolism. This is GTPase Era from Clostridium tetani (strain Massachusetts / E88).